The chain runs to 387 residues: Formate-dependent phosphoribosylglycinamide formyltransferase (387 aa).

N(1)-(5-phospho-beta-D-ribosyl)glycinamide-binding positions include 12–13 (EL) and glutamate 72. Residues arginine 104, lysine 145, 150–155 (SSGKGQ), 185–188 (EEFI), and glutamate 193 contribute to the ATP site. The 192-residue stretch at 109 to 300 (DLAARELGLA…EFELHLRAVL (192 aa)) folds into the ATP-grasp domain. Mg(2+) is bound by residues glutamate 258 and glutamate 270. N(1)-(5-phospho-beta-D-ribosyl)glycinamide contacts are provided by residues aspartate 277, lysine 347, and 354-355 (RR).

It belongs to the PurK/PurT family. Homodimer.

It catalyses the reaction N(1)-(5-phospho-beta-D-ribosyl)glycinamide + formate + ATP = N(2)-formyl-N(1)-(5-phospho-beta-D-ribosyl)glycinamide + ADP + phosphate + H(+). Its pathway is purine metabolism; IMP biosynthesis via de novo pathway; N(2)-formyl-N(1)-(5-phospho-D-ribosyl)glycinamide from N(1)-(5-phospho-D-ribosyl)glycinamide (formate route): step 1/1. Involved in the de novo purine biosynthesis. Catalyzes the transfer of formate to 5-phospho-ribosyl-glycinamide (GAR), producing 5-phospho-ribosyl-N-formylglycinamide (FGAR). Formate is provided by PurU via hydrolysis of 10-formyl-tetrahydrofolate. The polypeptide is Formate-dependent phosphoribosylglycinamide formyltransferase (Anaeromyxobacter dehalogenans (strain 2CP-C)).